A 379-amino-acid polypeptide reads, in one-letter code: Glutamate 5-kinase (379 aa).

Residue Lys19 participates in ATP binding. Substrate contacts are provided by Ser59, Asp146, and Asn158. ATP contacts are provided by residues 178–179 (TD) and 220–226 (TGGMATK). The region spanning 285-363 (SGDIVIDQGA…KDIISILGYD (79 aa)) is the PUA domain.

It belongs to the glutamate 5-kinase family.

The protein resides in the cytoplasm. It catalyses the reaction L-glutamate + ATP = L-glutamyl 5-phosphate + ADP. It participates in amino-acid biosynthesis; L-proline biosynthesis; L-glutamate 5-semialdehyde from L-glutamate: step 1/2. In terms of biological role, catalyzes the transfer of a phosphate group to glutamate to form L-glutamate 5-phosphate. The chain is Glutamate 5-kinase from Vibrio vulnificus (strain YJ016).